The primary structure comprises 381 residues: Putative glycosyltransferase EpsD (381 aa).

It belongs to the glycosyltransferase group 1 family. Glycosyltransferase 4 subfamily.

Functionally, may be involved in the production of the exopolysaccharide (EPS) component of the extracellular matrix during biofilm formation. EPS is responsible for the adhesion of chains of cells into bundles. Required for biofilm maintenance. This is Putative glycosyltransferase EpsD (epsD) from Bacillus subtilis (strain 168).